Reading from the N-terminus, the 96-residue chain is UPF0235 protein YpsIP31758_0827 (96 aa).

This sequence belongs to the UPF0235 family.

The protein is UPF0235 protein YpsIP31758_0827 of Yersinia pseudotuberculosis serotype O:1b (strain IP 31758).